Consider the following 428-residue polypeptide: MSNVLPKGVFDIFPYVTNSKNLWRNSFLWKTVEHAAHRICNLYGFDEIRTPVFEKTETFLRVGEHSDIVKKEVYTFLDKKGRSLTLRPEGTAAVVRALLDHSADMRKDNKIYYILPMFRYERQQSGRYRQHHQFGLEAIGVRHPLRDAEVLSLLWDFYAAVGLKHMQIQVNFLGGRKTRARYDEALREFFRKDLDKLSTLSQERFHANLLRILDSKEPEDQAFIEQAPSILDYVDDQDLNYFDSVLAELKVLGIPYKINPRLVRGLDYYTDLVFEAVTVVGDHSYALGGGGRYDELVAQSGGPAMPAFGFGVGLERVIQTLLEQGAALPTAPRRLRLIPMDESADAFCFSWAKHLRHLGVATEVDWAHKKPKTALKDAADQQVGFVCFVGEQELSTKQFIVKDMSLHQSFSGAQQDVEQRLVYEVQNA.

This sequence belongs to the class-II aminoacyl-tRNA synthetase family. As to quaternary structure, homodimer.

It is found in the cytoplasm. The enzyme catalyses tRNA(His) + L-histidine + ATP = L-histidyl-tRNA(His) + AMP + diphosphate + H(+). The polypeptide is Histidine--tRNA ligase (hisS) (Chlamydia muridarum (strain MoPn / Nigg)).